Here is a 3184-residue protein sequence, read N- to C-terminus: WD repeat- and FYVE domain-containing protein 4 (3184 aa).

A compositionally biased stretch (basic and acidic residues) spans 1 to 18; that stretch reads MEAEDLSKAEDRNEDPGS. 4 disordered regions span residues 1–39, 944–993, 1837–1869, and 2309–2335; these read MEAE…QSSS, SHTH…QDST, VGAE…KAHP, and ALSS…NQDE. A compositionally biased stretch (polar residues) spans 981–993; that stretch reads QAPQPLGESQDST. Residues 2314 to 2324 are compositionally biased toward basic and acidic residues; sequence RHKESQDKNDH. The 126-residue stretch at 2385 to 2510 folds into the BEACH-type PH domain; it reads LDKEKVTQKF…DRSKAFKSFC (126 aa). Residues 2527-2821 enclose the BEACH domain; it reads SLRRYPGSDR…QLFTKPHPAR (295 aa). WD repeat units follow at residues 2863–2922, 2923–2972, 2973–3014, 3015–3057, 3058–3141, and 3142–3184; these read MYLF…YGSD, KVLM…PRGL, RLRQ…LDHL, THVT…GQPL, ASIT…ELDV, and SIAL…SADG. Residues 3107-3128 form a disordered region; that stretch reads SVPGRPAGEEPPAQPPSPRGHK.

Interacts with HSP90AB1.

It localises to the early endosome. It is found in the endoplasmic reticulum. Functionally, plays a critical role in the regulation of cDC1-mediated cross-presentation of viral and tumor antigens in dendritic cells. Mechanistically, acts near the plasma membrane and interacts with endosomal membranes to promote endosomal-to-cytosol antigen trafficking. Also plays a role in B-cell survival through regulation of autophagy. This Homo sapiens (Human) protein is WD repeat- and FYVE domain-containing protein 4 (WDFY4).